The sequence spans 1556 residues: Disco-interacting protein 2 homolog C (1556 aa).

The region spanning 7–120 (EGMALPLEVR…PMPSKRRSLV (114 aa)) is the DMAP1-binding domain. Disordered stretches follow at residues 47-157 (YLPQ…SQGS) and 170-189 (GSTT…SGAA). The segment covering 81–93 (GSRDERYRSDVHT) has biased composition (basic and acidic residues). Polar residues-rich tracts occupy residues 120 to 136 (VVQT…TSSG) and 144 to 157 (QGDS…SQGS). The span at 170-183 (GSTTSTTSSSSTQS) shows a compositional bias: low complexity. At T264 the chain carries Phosphothreonine.

Belongs to the DIP2 family.

This chain is Disco-interacting protein 2 homolog C (DIP2C), found in Homo sapiens (Human).